Reading from the N-terminus, the 86-residue chain is Large ribosomal subunit protein uL23c (86 aa).

This sequence belongs to the universal ribosomal protein uL23 family. As to quaternary structure, part of the 50S ribosomal subunit.

It localises to the plastid. Its subcellular location is the chloroplast. Functionally, binds to 23S rRNA. This chain is Large ribosomal subunit protein uL23c (rpl23), found in Chlorella vulgaris (Green alga).